Consider the following 217-residue polypeptide: Ribosomal RNA small subunit methyltransferase G (217 aa).

S-adenosyl-L-methionine-binding positions include Gly78, Phe83, 129 to 130 (AE), and Arg146.

The protein belongs to the methyltransferase superfamily. RNA methyltransferase RsmG family.

The protein localises to the cytoplasm. It carries out the reaction guanosine(527) in 16S rRNA + S-adenosyl-L-methionine = N(7)-methylguanosine(527) in 16S rRNA + S-adenosyl-L-homocysteine. Its function is as follows. Specifically methylates the N7 position of guanine in position 527 of 16S rRNA. The protein is Ribosomal RNA small subunit methyltransferase G of Geobacter sp. (strain M21).